The following is a 272-amino-acid chain: Zinc transporter ZupT (272 aa).

The next 8 membrane-spanning stretches (helical) occupy residues 12 to 32, 40 to 60, 76 to 96, 126 to 146, 158 to 178, 187 to 207, 211 to 231, and 247 to 267; these read ALAV…MVVF, LLAF…LSEI, LGFT…MVID, LLTA…TFFA, AFAI…PVYF, FGAS…GYLL, VLSE…MVFL, and HETV…LVLF. Fe(2+) contacts are provided by N136 and E139. E139 and H164 together coordinate Zn(2+). N165, E168, and E197 together coordinate Fe(2+). Position 168 (E168) interacts with Zn(2+).

The protein belongs to the ZIP transporter (TC 2.A.5) family. ZupT subfamily.

The protein resides in the cell inner membrane. The enzyme catalyses Zn(2+)(in) = Zn(2+)(out). Functionally, mediates zinc uptake. May also transport other divalent cations. The polypeptide is Zinc transporter ZupT (Xanthomonas campestris pv. campestris (strain ATCC 33913 / DSM 3586 / NCPPB 528 / LMG 568 / P 25)).